The chain runs to 198 residues: UPF0314 protein Saro_1818 (198 aa).

A run of 5 helical transmembrane segments spans residues 13–33 (GGSL…LGMG), 62–82 (WYSF…HIVW), 96–116 (LALA…PIII), 153–173 (APVL…LWAI), and 177–197 (LALN…WQGG).

Belongs to the UPF0314 family.

It localises to the cell membrane. This Novosphingobium aromaticivorans (strain ATCC 700278 / DSM 12444 / CCUG 56034 / CIP 105152 / NBRC 16084 / F199) protein is UPF0314 protein Saro_1818.